The primary structure comprises 152 residues: Dehydratase aurZ (152 aa).

In terms of domain architecture, EthD spans 34–129; that stretch reads PSLSEKEYRH…APDHVNFADT (96 aa).

Belongs to the tpcK family.

It catalyses the reaction naphtopyrone YWA1 = norrubrofusarin + H2O + H(+). It functions in the pathway pigment biosynthesis. Functionally, dehydratase; part of the gene cluster that mediates the biosynthesis of aurofusarin, a red mycelium pigment which is acting as a mycotoxin. The first step is performed by the polyketide synthase which condenses one acetyl-CoA and 6 malonyl-CoA units to form the first intermediate, the cyclic heptaketide and yellow pigment YWA1. The C2 hydroxyl group in the pyrone ring of YWA1 is probably formed during ring closure by an aldol-type cyclization reaction. The dehydratase aurZ then acts as the first tailoring enzyme in the aurofusarin biosynthetic pathway by converting YWA1 to nor-rubrofusarin. Nor-rubrofusarin is then methylated to rubrofusarin by the O-methyltransferase aurJ. Rubrofusarin is then transported across the plasma membrane by the rubrofusarin-specific pump aurT for further enzymatic processing by the extracellular complex composed of GIP1, aurF, aurO and aurS to yield aurofusarin. In Gibberella zeae (strain ATCC MYA-4620 / CBS 123657 / FGSC 9075 / NRRL 31084 / PH-1) (Wheat head blight fungus), this protein is Dehydratase aurZ.